The sequence spans 82 residues: ATP synthase subunit c, chloroplastic (82 aa).

2 helical membrane passes run 4-24 (IISA…AIGP) and 57-77 (LAFM…LLFA).

It belongs to the ATPase C chain family. As to quaternary structure, F-type ATPases have 2 components, F(1) - the catalytic core - and F(0) - the membrane proton channel. F(1) has five subunits: alpha(3), beta(3), gamma(1), delta(1), epsilon(1). F(0) has four main subunits: a(1), b(1), b'(1) and c(10-14). The alpha and beta chains form an alternating ring which encloses part of the gamma chain. F(1) is attached to F(0) by a central stalk formed by the gamma and epsilon chains, while a peripheral stalk is formed by the delta, b and b' chains.

Its subcellular location is the plastid. The protein localises to the chloroplast thylakoid membrane. F(1)F(0) ATP synthase produces ATP from ADP in the presence of a proton or sodium gradient. F-type ATPases consist of two structural domains, F(1) containing the extramembraneous catalytic core and F(0) containing the membrane proton channel, linked together by a central stalk and a peripheral stalk. During catalysis, ATP synthesis in the catalytic domain of F(1) is coupled via a rotary mechanism of the central stalk subunits to proton translocation. In terms of biological role, key component of the F(0) channel; it plays a direct role in translocation across the membrane. A homomeric c-ring of between 10-14 subunits forms the central stalk rotor element with the F(1) delta and epsilon subunits. This Antithamnion sp. (Red alga) protein is ATP synthase subunit c, chloroplastic.